The chain runs to 1426 residues: Homeobox protein cut-like 2 (1426 aa).

The interval 77–104 is disordered; it reads PEPPSAREQNEGTCPTGHTPANGNHLPG. Phosphoserine is present on serine 81. The stretch at 131–311 forms a coiled coil; that stretch reads ITLAARLGEA…IKTELSILRA (181 aa). 6 disordered regions span residues 351–419, 460–488, 599–628, 653–676, 743–769, and 904–977; these read ALLA…FPSL, KPPSAPAASVPCPEPTGAPEAVDGAGPEE, EIESQKGGESKNSPASVSIPNGTASSSTSE, ESGPRGRSVPPSPPERPSPATASQ, YASVSPSLSSSSSYSGQPNGRAWPRGD, and LGQG…SSSQ. Positions 374 to 395 are enriched in pro residues; that stretch reads PPYPPQLPPPPGPEDPLSPSPA. 2 stretches are compositionally biased toward low complexity: residues 397 to 408 and 460 to 470; these read PLLGPSLGPDGP and KPPSAPAASVP. The segment at residues 482–569 is a DNA-binding region (CUT 1); that stretch reads DGAGPEEEQL…VLALRTIQVR (88 aa). A coiled-coil region spans residues 587–655; sequence DAIKSILEQA…QQALLEMESG (69 aa). A compositionally biased stretch (polar residues) spans 608 to 628; that stretch reads SKNSPASVSIPNGTASSSTSE. Composition is skewed to low complexity over residues 743-757, 910-928, and 965-976; these read YASVSPSLSSSSSYS, QAPTQQPSASQASPTEPTS, and SSSLGGKPFSSS. The segment at residues 828–915 is a DNA-binding region (CUT 2); the sequence is QYELYMYREV…QGQGQAPTQQ (88 aa). Positions 983-1070 form a DNA-binding region, CUT 3; that stretch reads QEMVAMSPEL…VEKLRDMKKL (88 aa). A DNA-binding region (homeobox) is located at residues 1113–1172; sequence AKKPRVVLAPAEKEALRKAYQLEPYPSQQTIELLSFQLNLKTNTVINWFHNYRSRMRREM. The segment at 1177–1392 is disordered; that stretch reads TQDDPDFDPS…AALHPSTKVN (216 aa). Composition is skewed to basic and acidic residues over residues 1233 to 1245 and 1260 to 1274; these read APDRALVKIKQEE and DPDRGQDGPKEEHTH. Over residues 1318–1332 the composition is skewed to low complexity; it reads LSFKSTSESSCCSLE. Over residues 1338-1350 the composition is skewed to polar residues; that stretch reads PSVISSPDLTTCV. Residues 1351-1364 show a composition bias toward low complexity; the sequence is SPAPSSSAPISPSL.

The protein belongs to the CUT homeobox family. In terms of tissue distribution, restricted to neural tissues. Expressed exclusively in the central and peripheral nervous systems.

It is found in the nucleus. Its function is as follows. Transcription factor involved in the control of neuronal proliferation and differentiation in the brain. Regulates dendrite development and branching, dendritic spine formation, and synaptogenesis in cortical layers II-III. Binds to DNA in a sequence-specific manner. This is Homeobox protein cut-like 2 (Cux2) from Mus musculus (Mouse).